Consider the following 389-residue polypeptide: Ethanolamine-phosphate cytidylyltransferase (389 aa).

Residues 1-20 (MIRNGRGAAGGAEQPGPGGR) are disordered. Residues 221-222 (AF), 229-232 (HVDF), K259, 307-310 (HGKT), and 336-340 (SGSNL) contribute to the CTP site. S338 carries the post-translational modification Phosphoserine. T341 and T342 each carry phosphothreonine.

Belongs to the cytidylyltransferase family. Strongest expression in liver, heart, and skeletal muscle.

The enzyme catalyses phosphoethanolamine + CTP + H(+) = CDP-ethanolamine + diphosphate. It participates in phospholipid metabolism; phosphatidylethanolamine biosynthesis; phosphatidylethanolamine from ethanolamine: step 2/3. In terms of biological role, ethanolamine-phosphate cytidylyltransferase that catalyzes the second step in the synthesis of phosphatidylethanolamine (PE) from ethanolamine via the CDP-ethanolamine pathway. Phosphatidylethanolamine is a dominant inner-leaflet phospholipid in cell membranes, where it plays a role in membrane function by structurally stabilizing membrane-anchored proteins, and participates in important cellular processes such as cell division, cell fusion, blood coagulation, and apoptosis. The polypeptide is Ethanolamine-phosphate cytidylyltransferase (PCYT2) (Homo sapiens (Human)).